A 60-amino-acid polypeptide reads, in one-letter code: Large ribosomal subunit protein uL30 (60 aa).

It belongs to the universal ribosomal protein uL30 family. As to quaternary structure, part of the 50S ribosomal subunit.

The polypeptide is Large ribosomal subunit protein uL30 (Shewanella sp. (strain MR-7)).